A 352-amino-acid polypeptide reads, in one-letter code: Putative squamosa promoter-binding-like protein 19 (352 aa).

The interval alanine 68 to glycine 88 is disordered. Gly residues predominate over residues glycine 78–glycine 88. The SBP-type zinc finger occupies alanine 90–proline 167. Residues cysteine 93, cysteine 98, cysteine 115, histidine 118, cysteine 134, cysteine 137, histidine 141, and cysteine 153 each contribute to the Zn(2+) site. Residues lysine 150–lysine 166 carry the Bipartite nuclear localization signal motif. Residues serine 152–proline 174 are disordered.

The protein localises to the nucleus. Functionally, trans-acting factor that binds specifically to the consensus nucleotide sequence 5'-TNCGTACAA-3'. The polypeptide is Putative squamosa promoter-binding-like protein 19 (SPL19) (Oryza sativa subsp. japonica (Rice)).